Consider the following 457-residue polypeptide: Siroheme synthase (457 aa).

Residues 1 to 204 are precorrin-2 dehydrogenase /sirohydrochlorin ferrochelatase; that stretch reads MDHLPIFCQL…ADEKAVNATT (204 aa). NAD(+)-binding positions include 22-23 and 43-44; these read DV and LT. At serine 128 the chain carries Phosphoserine. Residues 216–457 form a uroporphyrinogen-III C-methyltransferase region; it reads GEVVLVGAGP…RDKLNWFSNY (242 aa). Residue proline 225 coordinates S-adenosyl-L-methionine. Aspartate 248 functions as the Proton acceptor in the catalytic mechanism. Lysine 270 functions as the Proton donor in the catalytic mechanism. Residues 301–303, isoleucine 306, 331–332, methionine 382, and glycine 411 each bind S-adenosyl-L-methionine; these read GGD and TA.

The protein in the N-terminal section; belongs to the precorrin-2 dehydrogenase / sirohydrochlorin ferrochelatase family. This sequence in the C-terminal section; belongs to the precorrin methyltransferase family.

The catalysed reaction is uroporphyrinogen III + 2 S-adenosyl-L-methionine = precorrin-2 + 2 S-adenosyl-L-homocysteine + H(+). The enzyme catalyses precorrin-2 + NAD(+) = sirohydrochlorin + NADH + 2 H(+). It catalyses the reaction siroheme + 2 H(+) = sirohydrochlorin + Fe(2+). It participates in cofactor biosynthesis; adenosylcobalamin biosynthesis; precorrin-2 from uroporphyrinogen III: step 1/1. Its pathway is cofactor biosynthesis; adenosylcobalamin biosynthesis; sirohydrochlorin from precorrin-2: step 1/1. It functions in the pathway porphyrin-containing compound metabolism; siroheme biosynthesis; precorrin-2 from uroporphyrinogen III: step 1/1. The protein operates within porphyrin-containing compound metabolism; siroheme biosynthesis; siroheme from sirohydrochlorin: step 1/1. It participates in porphyrin-containing compound metabolism; siroheme biosynthesis; sirohydrochlorin from precorrin-2: step 1/1. Functionally, multifunctional enzyme that catalyzes the SAM-dependent methylations of uroporphyrinogen III at position C-2 and C-7 to form precorrin-2 via precorrin-1. Then it catalyzes the NAD-dependent ring dehydrogenation of precorrin-2 to yield sirohydrochlorin. Finally, it catalyzes the ferrochelation of sirohydrochlorin to yield siroheme. This chain is Siroheme synthase, found in Salmonella heidelberg (strain SL476).